The following is a 221-amino-acid chain: 7-cyano-7-deazaguanine synthase (221 aa).

Leu8–Ile18 is a binding site for ATP. Positions 186, 196, 199, and 202 each coordinate Zn(2+).

It belongs to the QueC family. Requires Zn(2+) as cofactor.

The catalysed reaction is 7-carboxy-7-deazaguanine + NH4(+) + ATP = 7-cyano-7-deazaguanine + ADP + phosphate + H2O + H(+). The protein operates within purine metabolism; 7-cyano-7-deazaguanine biosynthesis. Functionally, catalyzes the ATP-dependent conversion of 7-carboxy-7-deazaguanine (CDG) to 7-cyano-7-deazaguanine (preQ(0)). The protein is 7-cyano-7-deazaguanine synthase of Stenotrophomonas maltophilia (strain R551-3).